The following is an 85-amino-acid chain: Toxin Cll7 (85 aa).

The first 19 residues, 1-19 (MNSLLMITACLVLFGTVWA), serve as a signal peptide directing secretion. Residues 20–83 (KEGYLVNTYT…TWPLPNKTCG (64 aa)) enclose the LCN-type CS-alpha/beta domain. 4 disulfides stabilise this stretch: cysteine 31–cysteine 82, cysteine 35–cysteine 58, cysteine 44–cysteine 63, and cysteine 48–cysteine 65.

It belongs to the long (4 C-C) scorpion toxin superfamily. Sodium channel inhibitor family. Beta subfamily. Expressed by the venom gland.

Its subcellular location is the secreted. Functionally, beta toxins bind voltage-independently at site-4 of sodium channels (Nav) and shift the voltage of activation toward more negative potentials thereby affecting sodium channel activation and promoting spontaneous and repetitive firing. The sequence is that of Toxin Cll7 from Centruroides limpidus (Mexican scorpion).